A 417-amino-acid polypeptide reads, in one-letter code: Serine hydroxymethyltransferase 4 (417 aa).

(6S)-5,6,7,8-tetrahydrofolate-binding positions include Leu121 and 125–127 (GHL). Residue Lys230 is modified to N6-(pyridoxal phosphate)lysine. Residue 355–357 (SPF) coordinates (6S)-5,6,7,8-tetrahydrofolate.

It belongs to the SHMT family. Homodimer. It depends on pyridoxal 5'-phosphate as a cofactor.

The protein localises to the cytoplasm. It carries out the reaction (6R)-5,10-methylene-5,6,7,8-tetrahydrofolate + glycine + H2O = (6S)-5,6,7,8-tetrahydrofolate + L-serine. Its pathway is one-carbon metabolism; tetrahydrofolate interconversion. It functions in the pathway amino-acid biosynthesis; glycine biosynthesis; glycine from L-serine: step 1/1. Functionally, catalyzes the reversible interconversion of serine and glycine with tetrahydrofolate (THF) serving as the one-carbon carrier. This reaction serves as the major source of one-carbon groups required for the biosynthesis of purines, thymidylate, methionine, and other important biomolecules. Also exhibits THF-independent aldolase activity toward beta-hydroxyamino acids, producing glycine and aldehydes, via a retro-aldol mechanism. The sequence is that of Serine hydroxymethyltransferase 4 from Colwellia psychrerythraea (strain 34H / ATCC BAA-681) (Vibrio psychroerythus).